The chain runs to 860 residues: Leucine--tRNA ligase (860 aa).

Residues 42–52 (PYPSGRLHMGH) carry the 'HIGH' region motif. The short motif at 619 to 623 (KMSKS) is the 'KMSKS' region element. Position 622 (Lys622) interacts with ATP.

This sequence belongs to the class-I aminoacyl-tRNA synthetase family.

It localises to the cytoplasm. It catalyses the reaction tRNA(Leu) + L-leucine + ATP = L-leucyl-tRNA(Leu) + AMP + diphosphate. In Escherichia coli O6:K15:H31 (strain 536 / UPEC), this protein is Leucine--tRNA ligase.